The chain runs to 775 residues: Armadillo-like helical domain-containing protein 4 (775 aa).

The N-terminal stretch at 1–47 (MLQDSITGIVNSFNLFFPSTMSRPTLMPTCVAFCSILFLTLATGCQA) is a signal peptide. The Extracellular segment spans residues 48-715 (FPKVERRETA…KDKAGYMSGM (668 aa)). Asn76 is a glycosylation site (N-linked (GlcNAc...) asparagine). Disordered stretches follow at residues 120–148 (AGLL…PGPS), 247–273 (VPGV…DGQS), and 324–366 (KFES…PSST). The segment covering 129–142 (GVYSSSEPVVSASE) has biased composition (polar residues). Residues 324 to 335 (KFESISRGRPPE) show a composition bias toward basic and acidic residues. The N-linked (GlcNAc...) asparagine glycan is linked to Asn476. Residues 559–669 (IPVLGSPMAP…PGITSQEPDI (111 aa)) are disordered. Residues 577–599 (TISSALPSEGRTSPSISRPNTAA) show a composition bias toward polar residues. Positions 606–640 (LESEEVEDDEDEEDEEDEEEEEEDEEDEEDEEDKE) are enriched in acidic residues. A helical membrane pass occupies residues 716–736 (LVPVGVGIAGALFILGALYSI). At 737 to 775 (KVMNRRRRNGFKRHKRKQREFNSMQDRVMLLADSSEDEF) the chain is on the cytoplasmic side. Ser770 and Ser771 each carry phosphoserine.

Interacts with IL6ST; this interaction prevents IL6ST protein homodimerization and bridges ARMH4 with IL6R and STAT3 and therefore inhibits phosphorylation of STAT3 at 'Tyr-705'. Interacts (via cytoplasmic tail) with RICTOR; this interaction bridges ARMH4 to the mTORC2 complex and inhibits the mTORC2 kinase activity. As to expression, expressed in bone-marroew cells.

The protein resides in the membrane. In terms of biological role, may modulate immune response and may play a role in inflammation. Down-modulates STAT3 signaling throught direct interaction with IL6ST, resulting in the inhibition of phosphorylation of STAT3 at 'Tyr-705'. May negatively regulates AKT signaling by modulating the activity of mTORC2 complex through RICTOR interaction. This Mus musculus (Mouse) protein is Armadillo-like helical domain-containing protein 4.